The chain runs to 157 residues: 3-dehydroquinate dehydratase (157 aa).

Y24 acts as the Proton acceptor in catalysis. Substrate contacts are provided by N75, H81, and D88. H101 serves as the catalytic Proton donor. Substrate-binding positions include 102 to 103 (LS) and R112.

Belongs to the type-II 3-dehydroquinase family. As to quaternary structure, homododecamer.

It carries out the reaction 3-dehydroquinate = 3-dehydroshikimate + H2O. It functions in the pathway metabolic intermediate biosynthesis; chorismate biosynthesis; chorismate from D-erythrose 4-phosphate and phosphoenolpyruvate: step 3/7. In terms of biological role, catalyzes a trans-dehydration via an enolate intermediate. This chain is 3-dehydroquinate dehydratase, found in Brucella melitensis biotype 1 (strain ATCC 23456 / CCUG 17765 / NCTC 10094 / 16M).